Consider the following 198-residue polypeptide: FMN-dependent NADH:quinone oxidoreductase (198 aa).

FMN-binding positions include serine 10, 16 to 18 (SQS), 94 to 97 (MYNF), and 138 to 141 (TRGG).

The protein belongs to the azoreductase type 1 family. Homodimer. FMN is required as a cofactor.

It catalyses the reaction 2 a quinone + NADH + H(+) = 2 a 1,4-benzosemiquinone + NAD(+). It carries out the reaction N,N-dimethyl-1,4-phenylenediamine + anthranilate + 2 NAD(+) = 2-(4-dimethylaminophenyl)diazenylbenzoate + 2 NADH + 2 H(+). Quinone reductase that provides resistance to thiol-specific stress caused by electrophilic quinones. Its function is as follows. Also exhibits azoreductase activity. Catalyzes the reductive cleavage of the azo bond in aromatic azo compounds to the corresponding amines. The chain is FMN-dependent NADH:quinone oxidoreductase from Shewanella sp. (strain ANA-3).